The primary structure comprises 276 residues: Molybdenum storage protein subunit alpha (276 aa).

Octamer consisting of 4 alpha and 4 beta chains.

It localises to the cytoplasm. Functionally, intracellular storage of molybdenum. Binds polyoxomolybdates. Can bind at least 90 molybdenum atoms per protein molecule. This chain is Molybdenum storage protein subunit alpha, found in Azotobacter vinelandii (strain DJ / ATCC BAA-1303).